Reading from the N-terminus, the 96-residue chain is Protein RnfH (96 aa).

Belongs to the UPF0125 (RnfH) family.

The sequence is that of Protein RnfH from Escherichia coli O139:H28 (strain E24377A / ETEC).